We begin with the raw amino-acid sequence, 427 residues long: Glutamate-1-semialdehyde 2,1-aminomutase (427 aa).

Lys-264 carries the post-translational modification N6-(pyridoxal phosphate)lysine.

This sequence belongs to the class-III pyridoxal-phosphate-dependent aminotransferase family. HemL subfamily. As to quaternary structure, homodimer. The cofactor is pyridoxal 5'-phosphate.

The protein localises to the cytoplasm. It carries out the reaction (S)-4-amino-5-oxopentanoate = 5-aminolevulinate. It functions in the pathway porphyrin-containing compound metabolism; protoporphyrin-IX biosynthesis; 5-aminolevulinate from L-glutamyl-tRNA(Glu): step 2/2. In Campylobacter concisus (strain 13826), this protein is Glutamate-1-semialdehyde 2,1-aminomutase.